An 875-amino-acid polypeptide reads, in one-letter code: Neurotrypsin (875 aa).

Positions 1–20 (MTLARFVLALMLGALPEVVG) are cleaved as a signal peptide. N-linked (GlcNAc...) asparagine glycosylation is present at Asn-26. Residues 29 to 88 (LHHSHRHSPPPGPHYPYYLPTQQRPPRTRPPPPLPRFPRPPRALPAQRPHALQAGHTPRP) are disordered. Low complexity predominate over residues 43-53 (YPYYLPTQQRP). Residues 56–71 (TRPPPPLPRFPRPPRA) are compositionally biased toward pro residues. The 73-residue stretch at 93–165 (CPAGEPWVSV…GKVDWGYCDC (73 aa)) folds into the Kringle domain. 20 cysteine pairs are disulfide-bonded: Cys-93–Cys-165, Cys-109–Cys-149, Cys-138–Cys-163, Cys-195–Cys-259, Cys-208–Cys-269, Cys-239–Cys-249, Cys-305–Cys-369, Cys-318–Cys-379, Cys-349–Cys-359, Cys-412–Cys-475, Cys-425–Cys-485, Cys-455–Cys-465, Cys-525–Cys-589, Cys-538–Cys-599, Cys-569–Cys-579, Cys-619–Cys-750, Cys-661–Cys-677, Cys-765–Cys-831, Cys-794–Cys-808, and Cys-821–Cys-850. SRCR domains lie at 170 to 271 (VRLR…TCSF), 280 to 381 (IRLA…SCTP), 387 to 487 (IRLA…ACYP), and 500 to 601 (VRLV…ICDY). A zymogen activation region region spans residues 619-630 (CGLRLLHRRQKR). In terms of domain architecture, Peptidase S1 spans 631–874 (IIGGKNSLRG…FVPWIKSVTK (244 aa)). The active-site Charge relay system is the His-676. Residue Asn-683 is glycosylated (N-linked (GlcNAc...) asparagine). Residue Asp-726 is the Charge relay system of the active site. Ser-825 serves as the catalytic Charge relay system.

This sequence belongs to the peptidase S1 family.

Its subcellular location is the secreted. Functionally, plays a role in neuronal plasticity and the proteolytic action may subserve structural reorganizations associated with learning and memory operations. The chain is Neurotrypsin (PRSS12) from Pan troglodytes (Chimpanzee).